A 532-amino-acid polypeptide reads, in one-letter code: ATP-dependent RNA helicase DBP3 (532 aa).

Residues 1 to 78 (MGKRDRTEDD…EVAEEKPKMT (78 aa)) form a disordered region. The span at 15 to 58 (KKVKLDKKDKKEKKEKKDKKDKKDKKDKKDKKDKKEKKEKKEKK) shows a compositional bias: basic residues. Positions 126-152 (MEFSHVTLDPRITKVLTKFPRPTPIQA) match the Q motif motif. One can recognise a Helicase ATP-binding domain in the interval 155–327 (WPYLLAGKDM…EGFMKTPTKV (173 aa)). 168 to 175 (AETGSGKT) provides a ligand contact to ATP. The short motif at 274–277 (DEAD) is the DEAD box element. The Helicase C-terminal domain maps to 356 to 502 (RLLDLLRQYA…PVPDELLKFG (147 aa)).

The protein belongs to the DEAD box helicase family. DDX5/DBP2 subfamily.

It is found in the nucleus. The protein resides in the nucleolus. The catalysed reaction is ATP + H2O = ADP + phosphate + H(+). In terms of biological role, ATP-dependent RNA helicase required for 60S ribosomal subunit synthesis. Involved in efficient pre-rRNA processing, predominantly at site A3, which is necessary for the normal formation of 25S and 5.8S rRNAs. In Yarrowia lipolytica (strain CLIB 122 / E 150) (Yeast), this protein is ATP-dependent RNA helicase DBP3 (DBP3).